The primary structure comprises 182 residues: Heat shock protein beta-2 (182 aa).

The region spanning 55 to 163 (PAGEGSRAGA…DTEVNEVYIS (109 aa)) is the sHSP domain.

It belongs to the small heat shock protein (HSP20) family. As to quaternary structure, interacts with DMPK; may enhance its kinase activity. Expressed preferentially in skeletal muscle and heart but not in the lens.

The protein resides in the cytoplasm. It is found in the nucleus. May regulate the kinase DMPK. This is Heat shock protein beta-2 (HSPB2) from Homo sapiens (Human).